A 159-amino-acid chain; its full sequence is Phosphopantetheine adenylyltransferase (159 aa).

Serine 9 provides a ligand contact to substrate. Residues 9 to 10 (SF) and histidine 17 each bind ATP. Substrate contacts are provided by lysine 41, leucine 74, and lysine 88. ATP contacts are provided by residues 89 to 91 (GLR), glutamate 99, and 123 to 129 (YGYISST).

This sequence belongs to the bacterial CoaD family. As to quaternary structure, homohexamer. The cofactor is Mg(2+).

It localises to the cytoplasm. The enzyme catalyses (R)-4'-phosphopantetheine + ATP + H(+) = 3'-dephospho-CoA + diphosphate. Its pathway is cofactor biosynthesis; coenzyme A biosynthesis; CoA from (R)-pantothenate: step 4/5. Functionally, reversibly transfers an adenylyl group from ATP to 4'-phosphopantetheine, yielding dephospho-CoA (dPCoA) and pyrophosphate. In Corynebacterium diphtheriae (strain ATCC 700971 / NCTC 13129 / Biotype gravis), this protein is Phosphopantetheine adenylyltransferase.